Here is a 179-residue protein sequence, read N- to C-terminus: Large ribosomal subunit protein uL5 (179 aa).

This sequence belongs to the universal ribosomal protein uL5 family. As to quaternary structure, part of the 50S ribosomal subunit; part of the 5S rRNA/L5/L18/L25 subcomplex. Contacts the 5S rRNA and the P site tRNA. Forms a bridge to the 30S subunit in the 70S ribosome.

In terms of biological role, this is one of the proteins that bind and probably mediate the attachment of the 5S RNA into the large ribosomal subunit, where it forms part of the central protuberance. In the 70S ribosome it contacts protein S13 of the 30S subunit (bridge B1b), connecting the 2 subunits; this bridge is implicated in subunit movement. Contacts the P site tRNA; the 5S rRNA and some of its associated proteins might help stabilize positioning of ribosome-bound tRNAs. The chain is Large ribosomal subunit protein uL5 from Paramagnetospirillum magneticum (strain ATCC 700264 / AMB-1) (Magnetospirillum magneticum).